Consider the following 343-residue polypeptide: Ribosomal RNA small subunit methyltransferase C (343 aa).

This sequence belongs to the methyltransferase superfamily. RsmC family. In terms of assembly, monomer.

The protein resides in the cytoplasm. The catalysed reaction is guanosine(1207) in 16S rRNA + S-adenosyl-L-methionine = N(2)-methylguanosine(1207) in 16S rRNA + S-adenosyl-L-homocysteine + H(+). In terms of biological role, specifically methylates the guanine in position 1207 of 16S rRNA in the 30S particle. The chain is Ribosomal RNA small subunit methyltransferase C from Escherichia coli (strain K12 / DH10B).